Consider the following 614-residue polypeptide: Threonine--tRNA ligase (614 aa).

Positions 1-138 (MRTLMIHSDY…HPLSELSRTI (138 aa)) are editing domain. The disordered stretch occupies residues 133–157 (ELSRTITTEPEEESEDSEEEPSEPS). Acidic residues predominate over residues 141–154 (EPEEESEDSEEEPS). Residues 200–495 (PHVRLMREKE…TDKGNKPSLP (296 aa)) form a catalytic region. Residues Cys292, His344, and His466 each contribute to the Zn(2+) site.

Belongs to the class-II aminoacyl-tRNA synthetase family. Homodimer. It depends on Zn(2+) as a cofactor.

The protein resides in the cytoplasm. The enzyme catalyses tRNA(Thr) + L-threonine + ATP = L-threonyl-tRNA(Thr) + AMP + diphosphate + H(+). Functionally, catalyzes the attachment of threonine to tRNA(Thr) in a two-step reaction: L-threonine is first activated by ATP to form Thr-AMP and then transferred to the acceptor end of tRNA(Thr). Also edits incorrectly charged L-seryl-tRNA(Thr). The sequence is that of Threonine--tRNA ligase from Methanosphaera stadtmanae (strain ATCC 43021 / DSM 3091 / JCM 11832 / MCB-3).